Reading from the N-terminus, the 829-residue chain is Periplasmic nitrate reductase (829 aa).

Positions 1-29 form a signal peptide, tat-type signal; sequence MKMTRRAFVKANAAASAAAVAGVTLPATA. In terms of domain architecture, 4Fe-4S Mo/W bis-MGD-type spans 41–97; it reads ITWDKAPCRFCGTGCSVLVGTQNGKVVATQGDPEAPVNKGLNCIKGYFLSKIMYGKD. Cys-48, Cys-51, Cys-55, and Cys-83 together coordinate [4Fe-4S] cluster. Mo-bis(molybdopterin guanine dinucleotide)-binding positions include Lys-85, Gln-152, Asn-177, Cys-181, 214–221, 245–249, 264–266, Met-374, Gln-378, Asn-484, 510–511, Lys-533, Asp-560, and 718–727; these read WGSNMAEM, STYYH, QSD, SD, and TGRVLEHWHT. Phe-794 is a binding site for substrate. Mo-bis(molybdopterin guanine dinucleotide) contacts are provided by Asn-802 and Lys-819.

This sequence belongs to the prokaryotic molybdopterin-containing oxidoreductase family. NasA/NapA/NarB subfamily. Component of the periplasmic nitrate reductase NapAB complex composed of NapA and NapB. [4Fe-4S] cluster is required as a cofactor. It depends on Mo-bis(molybdopterin guanine dinucleotide) as a cofactor. Post-translationally, predicted to be exported by the Tat system. The position of the signal peptide cleavage has not been experimentally proven.

The protein localises to the periplasm. The enzyme catalyses 2 Fe(II)-[cytochrome] + nitrate + 2 H(+) = 2 Fe(III)-[cytochrome] + nitrite + H2O. Catalytic subunit of the periplasmic nitrate reductase complex NapAB. Receives electrons from NapB and catalyzes the reduction of nitrate to nitrite. The chain is Periplasmic nitrate reductase from Vibrio atlanticus (strain LGP32) (Vibrio splendidus (strain Mel32)).